The following is an 894-amino-acid chain: Genome polyprotein 2 (894 aa).

The 121-residue stretch at 109-229 folds into the Peptidase C6 domain; it reads TAEFKSGFCY…GCEYMLYPVG (121 aa). Catalysis depends on for helper component proteinase activity residues Cys117 and His189. Residues 502 to 539 are disordered; sequence WVSLDSGDEDDDHSGGGGGSPQTPGGQPPASPAPGTHQ.

It belongs to the bymoviruses polyprotein 2 family. The viral RNA2 of bymoviruses is expressed as a single polyprotein which undergoes post-translational proteolytic processing resulting in the production of at least two individual proteins. The HC-pro cleaves its C-terminus autocatalytically (Potential).

It catalyses the reaction Hydrolyzes a Gly-|-Gly bond at its own C-terminus, commonly in the sequence -Tyr-Xaa-Val-Gly-|-Gly, in the processing of the potyviral polyprotein.. The sequence is that of Genome polyprotein 2 (RNA2) from Hordeum vulgare (Barley).